Reading from the N-terminus, the 586-residue chain is Probable zinc metalloprotease EGY3, chloroplastic (586 aa).

A chloroplast-targeting transit peptide spans 1–54 (MASSSLVTSLLFSSSSSSNTATSTSSRRSFSLFSKNQYCKPRPLRRSSSRLLVR). Disordered regions lie at residues 13–32 (SSSSSSNTATSTSSRRSFSL) and 58–122 (QQQQ…DWRS). The span at 61-73 (QEEKAAPAAESHH) shows a compositional bias: basic and acidic residues. Residues 103–195 (VKKSKEELEE…NTFKALDLNK (93 aa)) are a coiled coil. Helical transmembrane passes span 287-307 (LSAVALAVTTFGTIAIMSGFF), 318-338 (VSDVLPLFAGFLSILGVSEIA), 389-409 (ASAYLTSVALAVSAFVSDGSL), 427-447 (PLLSFVQAVIGPYADELGNVL), 454-474 (VGVPVDPLAFAGLLGIVVTSL), 506-526 (VALGAGAIIGGSVLCLAWGLF), and 550-570 (YAWGLVLAVVCLLTLFPNGGG).

The protein belongs to the peptidase M50B family.

The protein localises to the plastid. The protein resides in the chloroplast membrane. Its function is as follows. Probable membrane-associated metalloprotease that may be involved in chloroplast development. This Oryza sativa subsp. japonica (Rice) protein is Probable zinc metalloprotease EGY3, chloroplastic (EGY3).